The following is a 98-amino-acid chain: UPF0213 protein LACR_2011 (98 aa).

Positions 2–79 constitute a GIY-YIG domain; sequence NTHFTYVLQC…KLVRQQKLKL (78 aa).

Belongs to the UPF0213 family.

This chain is UPF0213 protein LACR_2011, found in Lactococcus lactis subsp. cremoris (strain SK11).